A 437-amino-acid polypeptide reads, in one-letter code: Elongation factor 1-alpha (437 aa).

The 226-residue stretch at 4–229 (KPHMNLVVIG…DQLQPPAKPV (226 aa)) folds into the tr-type G domain. Residues 13–20 (GHVDHGKS) form a G1 region. 13-20 (GHVDHGKS) lines the GTP pocket. Position 20 (Ser-20) interacts with Mg(2+). The segment at 69 to 73 (GITID) is G2. Residues 90-93 (DAPG) are G3. GTP is bound by residues 90 to 94 (DAPGH) and 152 to 155 (NKMD). Residues 152-155 (NKMD) form a G4 region. A G5 region spans residues 193 to 195 (SAW).

It belongs to the TRAFAC class translation factor GTPase superfamily. Classic translation factor GTPase family. EF-Tu/EF-1A subfamily.

The protein resides in the cytoplasm. The enzyme catalyses GTP + H2O = GDP + phosphate + H(+). GTP hydrolase that promotes the GTP-dependent binding of aminoacyl-tRNA to the A-site of ribosomes during protein biosynthesis. This Aeropyrum pernix (strain ATCC 700893 / DSM 11879 / JCM 9820 / NBRC 100138 / K1) protein is Elongation factor 1-alpha.